Consider the following 235-residue polypeptide: Pathogen-related protein (235 aa).

The polypeptide is Pathogen-related protein (Hordeum vulgare (Barley)).